Consider the following 314-residue polypeptide: Formimidoylglutamase (314 aa).

Residues histidine 127, aspartate 151, histidine 153, aspartate 155, aspartate 239, and aspartate 241 each coordinate Mn(2+).

This sequence belongs to the arginase family. Requires Mn(2+) as cofactor.

The enzyme catalyses N-formimidoyl-L-glutamate + H2O = formamide + L-glutamate. It functions in the pathway amino-acid degradation; L-histidine degradation into L-glutamate; L-glutamate from N-formimidoyl-L-glutamate (hydrolase route): step 1/1. Catalyzes the conversion of N-formimidoyl-L-glutamate to L-glutamate and formamide. The sequence is that of Formimidoylglutamase from Corynebacterium efficiens (strain DSM 44549 / YS-314 / AJ 12310 / JCM 11189 / NBRC 100395).